Reading from the N-terminus, the 152-residue chain is Deoxyuridine 5'-triphosphate nucleotidohydrolase (152 aa).

Substrate-binding positions include 71-73, N84, 88-90, and M98; these read RSG and LID.

This sequence belongs to the dUTPase family. Requires Mg(2+) as cofactor.

The catalysed reaction is dUTP + H2O = dUMP + diphosphate + H(+). The protein operates within pyrimidine metabolism; dUMP biosynthesis; dUMP from dCTP (dUTP route): step 2/2. This enzyme is involved in nucleotide metabolism: it produces dUMP, the immediate precursor of thymidine nucleotides and it decreases the intracellular concentration of dUTP so that uracil cannot be incorporated into DNA. The polypeptide is Deoxyuridine 5'-triphosphate nucleotidohydrolase (Shewanella denitrificans (strain OS217 / ATCC BAA-1090 / DSM 15013)).